Here is a 301-residue protein sequence, read N- to C-terminus: N-acetylmuramic acid 6-phosphate etherase (301 aa).

Residues 57–220 enclose the SIS domain; the sequence is ITEAFKKGGR…TTGAMIRSGK (164 aa). Residue Glu85 is the Proton donor of the active site. Glu116 is a catalytic residue.

Belongs to the GCKR-like family. MurNAc-6-P etherase subfamily. In terms of assembly, homodimer.

It carries out the reaction N-acetyl-D-muramate 6-phosphate + H2O = N-acetyl-D-glucosamine 6-phosphate + (R)-lactate. The protein operates within amino-sugar metabolism; 1,6-anhydro-N-acetylmuramate degradation. Its pathway is amino-sugar metabolism; N-acetylmuramate degradation. It functions in the pathway cell wall biogenesis; peptidoglycan recycling. Its function is as follows. Specifically catalyzes the cleavage of the D-lactyl ether substituent of MurNAc 6-phosphate, producing GlcNAc 6-phosphate and D-lactate. Together with AnmK, is also required for the utilization of anhydro-N-acetylmuramic acid (anhMurNAc) either imported from the medium or derived from its own cell wall murein, and thus plays a role in cell wall recycling. The protein is N-acetylmuramic acid 6-phosphate etherase of Photobacterium profundum (strain SS9).